Here is a 586-residue protein sequence, read N- to C-terminus: FAD-linked oxidoreductase orf1 (586 aa).

The N-terminal stretch at 1 to 17 (MKSFATTVLLVTPGIYA) is a signal peptide. Asparagine 29, asparagine 51, asparagine 79, asparagine 110, asparagine 146, asparagine 188, asparagine 314, asparagine 321, asparagine 358, asparagine 402, asparagine 434, and asparagine 461 each carry an N-linked (GlcNAc...) asparagine glycan. In terms of domain architecture, FAD-binding PCMH-type spans 124-303 (TLGNYVSYAI…LSMTAKVHPD (180 aa)).

The protein belongs to the oxygen-dependent FAD-linked oxidoreductase family.

It catalyses the reaction betaenone C = betaenone A. It participates in mycotoxin biosynthesis. FAD-linked oxidoreductase; part of the gene cluster that mediates the biosynthesis of betaenones, phytotoxic polyketides involved in leaf spot disease in sugar beets. The first step of the pathway is the synthesis of dehydroprobetaenone I by the polyketide synthase bet1 and the enoyl reductase bet3 via condensation of one acetyl-CoA starter unit with 7 malonyl-CoA units and 5 methylations. The C-terminal reductase (R) domain of bet1 catalyzes the reductive release of the polyketide chain. Because bet1 lacks a designated enoylreductase (ER) domain, the required activity is provided the enoyl reductase bet3. The short-chain dehydrogenase/reductase bet4 then catalyzes reduction of dehydroprobetaenone I to probetaenone I. The cytochrome P450 monooxygenase bet2 catalyzes successive epoxidation, oxidation (resulting from epoxide opening) and hydroxylation to install a tertiary alcohol in the decaline ring to yield betaenone C from dehydroprobetaenone I and betaenone B from probetaenone I. The FAD-linked oxidoreductase (orf1) is probably responsible for the conversion of betaenone C to betaenone A via an intramolecular aldol reaction between C-1 and C-17 to form the bridged tricyclic system in betaenone A. This chain is FAD-linked oxidoreductase orf1, found in Neocamarosporium betae (Beet black rot fungus).